A 548-amino-acid polypeptide reads, in one-letter code: Folylpolyglutamate synthase (548 aa).

An ATP-binding site is contributed by 130–133 (GKGS). Residues serine 157, glutamate 234, and histidine 262 each coordinate Mg(2+). Residues arginine 382 and aspartate 396 each coordinate ATP.

Belongs to the folylpolyglutamate synthase family. The cofactor is a monovalent cation.

Its subcellular location is the mitochondrion inner membrane. It localises to the mitochondrion matrix. The protein localises to the cytoplasm. The enzyme catalyses (6S)-5,6,7,8-tetrahydrofolyl-(gamma-L-Glu)(n) + L-glutamate + ATP = (6S)-5,6,7,8-tetrahydrofolyl-(gamma-L-Glu)(n+1) + ADP + phosphate + H(+). Its pathway is cofactor biosynthesis; tetrahydrofolylpolyglutamate biosynthesis. Functionally, catalyzes conversion of folates to polyglutamate derivatives allowing concentration of folate compounds in the cell and the intracellular retention of these cofactors, which are important substrates for most of the folate-dependent enzymes that are involved in one-carbon transfer reactions involved in purine, pyrimidine and amino acid synthesis. Required for methionine synthesis and maintenance of intact mitochondrial DNA. Involved in telomere maintenance. This is Folylpolyglutamate synthase from Saccharomyces cerevisiae (strain AWRI1631) (Baker's yeast).